Consider the following 429-residue polypeptide: Phosphomethylpyrimidine synthase 1 (429 aa).

Substrate contacts are provided by residues asparagine 65, methionine 94, tyrosine 123, histidine 162, 184-186 (SRG), 225-228 (DGLR), and glutamate 264. Histidine 268 contributes to the Zn(2+) binding site. Tyrosine 291 provides a ligand contact to substrate. Histidine 332 is a binding site for Zn(2+). The [4Fe-4S] cluster site is built by cysteine 408, cysteine 411, and cysteine 415.

The protein belongs to the ThiC family. Requires [4Fe-4S] cluster as cofactor.

The catalysed reaction is 5-amino-1-(5-phospho-beta-D-ribosyl)imidazole + S-adenosyl-L-methionine = 4-amino-2-methyl-5-(phosphooxymethyl)pyrimidine + CO + 5'-deoxyadenosine + formate + L-methionine + 3 H(+). It functions in the pathway cofactor biosynthesis; thiamine diphosphate biosynthesis. Functionally, catalyzes the synthesis of the hydroxymethylpyrimidine phosphate (HMP-P) moiety of thiamine from aminoimidazole ribotide (AIR) in a radical S-adenosyl-L-methionine (SAM)-dependent reaction. The sequence is that of Phosphomethylpyrimidine synthase 1 from Methanosphaera stadtmanae (strain ATCC 43021 / DSM 3091 / JCM 11832 / MCB-3).